We begin with the raw amino-acid sequence, 477 residues long: Probable cytosolic Fe-S cluster assembly factor GL21135 (477 aa).

[4Fe-4S] cluster-binding residues include cysteine 23, cysteine 69, cysteine 72, cysteine 75, cysteine 188, cysteine 244, cysteine 396, and cysteine 400.

This sequence belongs to the NARF family.

Functionally, component of the cytosolic iron-sulfur (Fe/S) protein assembly machinery. Required for maturation of extramitochondrial Fe/S proteins. This Drosophila persimilis (Fruit fly) protein is Probable cytosolic Fe-S cluster assembly factor GL21135.